Consider the following 218-residue polypeptide: Guanylate kinase (218 aa).

The 180-residue stretch at 14–193 (GVMLVLSSPS…AFASVRAIVS (180 aa)) folds into the Guanylate kinase-like domain. ATP is bound at residue 21–28 (SPSGAGKS).

This sequence belongs to the guanylate kinase family.

The protein resides in the cytoplasm. It carries out the reaction GMP + ATP = GDP + ADP. In terms of biological role, essential for recycling GMP and indirectly, cGMP. The polypeptide is Guanylate kinase (Chelativorans sp. (strain BNC1)).